Reading from the N-terminus, the 338-residue chain is Ferrochelatase (338 aa).

The Fe cation site is built by H210 and E291.

It belongs to the ferrochelatase family.

It is found in the cytoplasm. The enzyme catalyses heme b + 2 H(+) = protoporphyrin IX + Fe(2+). The protein operates within porphyrin-containing compound metabolism; protoheme biosynthesis; protoheme from protoporphyrin-IX: step 1/1. Its function is as follows. Catalyzes the ferrous insertion into protoporphyrin IX. The chain is Ferrochelatase from Helicobacter acinonychis (strain Sheeba).